The chain runs to 405 residues: Imidazolonepropionase (405 aa).

The Fe(3+) site is built by His-73 and His-75. Zn(2+) is bound by residues His-73 and His-75. 4-imidazolone-5-propanoate is bound by residues Arg-82, Tyr-145, and His-178. Tyr-145 contacts N-formimidoyl-L-glutamate. His-243 is a binding site for Fe(3+). His-243 serves as a coordination point for Zn(2+). A 4-imidazolone-5-propanoate-binding site is contributed by Gln-246. Residue Asp-318 participates in Fe(3+) binding. Asp-318 serves as a coordination point for Zn(2+). N-formimidoyl-L-glutamate is bound by residues Asn-320 and Gly-322. Position 323 (Thr-323) interacts with 4-imidazolone-5-propanoate.

The protein belongs to the metallo-dependent hydrolases superfamily. HutI family. Zn(2+) serves as cofactor. It depends on Fe(3+) as a cofactor.

The protein localises to the cytoplasm. It carries out the reaction 4-imidazolone-5-propanoate + H2O = N-formimidoyl-L-glutamate. The protein operates within amino-acid degradation; L-histidine degradation into L-glutamate; N-formimidoyl-L-glutamate from L-histidine: step 3/3. In terms of biological role, catalyzes the hydrolytic cleavage of the carbon-nitrogen bond in imidazolone-5-propanoate to yield N-formimidoyl-L-glutamate. It is the third step in the universal histidine degradation pathway. The protein is Imidazolonepropionase of Brucella suis biovar 1 (strain 1330).